Reading from the N-terminus, the 188-residue chain is PRA1 family protein F4 (188 aa).

Positions 1–13 are enriched in polar residues; it reads MANNDEITTSSHA. The disordered stretch occupies residues 1-25; that stretch reads MANNDEITTSSHASPAVNHESISRA. 4 helical membrane-spanning segments follow: residues 67–86, 90–107, 119–139, and 142–162; these read YFRS…SLIW, SLIV…LYFL, IDDR…LLLT, and TFNI…HAVI.

The protein belongs to the PRA1 family.

It is found in the endosome membrane. In terms of biological role, may be involved in both secretory and endocytic intracellular trafficking in the endosomal/prevacuolar compartments. This chain is PRA1 family protein F4 (PRA1F4), found in Arabidopsis thaliana (Mouse-ear cress).